Consider the following 101-residue polypeptide: ATP synthase subunit f, mitochondrial (101 aa).

The transit peptide at 1–6 (MIFKRA) directs the protein to the mitochondrion.

This sequence belongs to the ATPase F chain family. F-type ATPases have 2 components, CF(1) - the catalytic core - and CF(0) - the membrane proton channel. In yeast, the dimeric form of ATP synthase consists of 17 polypeptides: alpha, beta, gamma, delta, epsilon, 4 (B), 5 (OSCP), 6 (A), 8, 9 (C), d, E (Tim11), f, g, h, i/j and k.

Its subcellular location is the mitochondrion. The protein resides in the mitochondrion inner membrane. Mitochondrial membrane ATP synthase (F(1)F(0) ATP synthase or Complex V) produces ATP from ADP in the presence of a proton gradient across the membrane which is generated by electron transport complexes of the respiratory chain. F-type ATPases consist of two structural domains, F(1) - containing the extramembraneous catalytic core and F(0) - containing the membrane proton channel, linked together by a central stalk and a peripheral stalk. During catalysis, ATP synthesis in the catalytic domain of F(1) is coupled via a rotary mechanism of the central stalk subunits to proton translocation. Part of the complex F(0) domain. Minor subunit located with subunit a in the membrane. This is ATP synthase subunit f, mitochondrial (ATP17) from Saccharomyces cerevisiae (strain ATCC 204508 / S288c) (Baker's yeast).